Consider the following 533-residue polypeptide: Retinoid isomerohydrolase (533 aa).

Position 2 is an N-acetylserine (serine 2). A phosphothreonine mark is found at threonine 101 and threonine 105. Cysteine 112 carries S-palmitoyl cysteine; in membrane form lipidation. Lysine 113 is subject to N6-acetyllysine. Serine 117 carries the phosphoserine modification. Histidine 180 serves as a coordination point for Fe cation. Cysteine 231 carries the S-palmitoyl cysteine; in membrane form lipid modification. Histidine 241 and histidine 313 together coordinate Fe cation. Residues cysteine 329 and cysteine 330 are each lipidated (S-palmitoyl cysteine; in membrane form). Histidine 527 contributes to the Fe cation binding site.

The protein belongs to the carotenoid oxygenase family. Interacts with MYO7A; this mediates light-dependent intracellular transport of RPE65. Fe(2+) is required as a cofactor. In terms of processing, palmitoylation by LRAT regulates ligand binding specificity; the palmitoylated form (membrane form) specifically binds all-trans-retinyl-palmitate, while the soluble unpalmitoylated form binds all-trans-retinol (vitamin A). As to expression, retinal pigment epithelium specific.

It is found in the cytoplasm. The protein localises to the cell membrane. The protein resides in the microsome membrane. The enzyme catalyses an all-trans-retinyl ester + H2O = 11-cis-retinol + a fatty acid + H(+). It carries out the reaction lutein = (3R,3'S)-zeaxanthin. It catalyses the reaction all-trans-retinyl hexadecanoate + H2O = 11-cis-retinol + hexadecanoate + H(+). Functionally, critical isomerohydrolase in the retinoid cycle involved in regeneration of 11-cis-retinal, the chromophore of rod and cone opsins. Catalyzes the cleavage and isomerization of all-trans-retinyl fatty acid esters to 11-cis-retinol which is further oxidized by 11-cis retinol dehydrogenase to 11-cis-retinal for use as visual chromophore. Essential for the production of 11-cis retinal for both rod and cone photoreceptors. Also capable of catalyzing the isomerization of lutein to meso-zeaxanthin an eye-specific carotenoid. The soluble form binds vitamin A (all-trans-retinol), making it available for LRAT processing to all-trans-retinyl ester. The membrane form, palmitoylated by LRAT, binds all-trans-retinyl esters, making them available for IMH (isomerohydrolase) processing to all-cis-retinol. The soluble form is regenerated by transferring its palmitoyl groups onto 11-cis-retinol, a reaction catalyzed by LRAT. This Mus musculus (Mouse) protein is Retinoid isomerohydrolase (Rpe65).